A 216-amino-acid chain; its full sequence is Adenylate kinase (216 aa).

10-15 (GAGKGT) contacts ATP. Residues 30–59 (STGDMFRAAMKAETELGLQAKSFIDKGALV) are NMP. Residues T31, R36, 57 to 59 (ALV), 85 to 88 (GFPR), and Q92 each bind AMP. The tract at residues 126–163 (GRRICKECGATYHLEFNPPAKADVCDKCGGELYQRSDD) is LID. R127 provides a ligand contact to ATP. C130 and C133 together coordinate Zn(2+). Residue 136 to 137 (TY) coordinates ATP. Residues C150 and C153 each contribute to the Zn(2+) site. Residues R160 and R171 each contribute to the AMP site. Q199 is an ATP binding site.

Belongs to the adenylate kinase family. Monomer.

The protein resides in the cytoplasm. The catalysed reaction is AMP + ATP = 2 ADP. It functions in the pathway purine metabolism; AMP biosynthesis via salvage pathway; AMP from ADP: step 1/1. In terms of biological role, catalyzes the reversible transfer of the terminal phosphate group between ATP and AMP. Plays an important role in cellular energy homeostasis and in adenine nucleotide metabolism. The protein is Adenylate kinase of Bacillus cytotoxicus (strain DSM 22905 / CIP 110041 / 391-98 / NVH 391-98).